Consider the following 441-residue polypeptide: Velvet complex subunit B (441 aa).

Composition is skewed to polar residues over residues methionine 1–histidine 14 and methionine 60–glutamate 75. Residues methionine 1–arginine 104 form a disordered region. In terms of domain architecture, Velvet spans glutamate 100–arginine 426.

This sequence belongs to the velvet family. VelB subfamily. As to quaternary structure, component of the heterotrimeric velvet complex composed of LAEA, VEA and VELB; VEA acting as a bridging protein between LAEA and VELB. Forms a heterodimeric complex with VOSA; the formation of the VELB-VOSA complex is light-dependent.

The protein resides in the nucleus. Its subcellular location is the cytoplasm. Component of the velvet transcription factor complex that controls sexual/asexual developmental ratio in response to light, promoting sexual development in the darkness while stimulating asexual sporulation under illumination. The velvet complex acts as a global regulator for secondary metabolite gene expression. Component of the VELB-VOSA heterodimeric complex that plays a dual role in activating genes associated with spore maturation and repressing certain development-associated genes. The VELB-VOSA complex binds DNA through the DNA-binding domain of VOSA that recognizes an 11-nucleotide consensus sequence 5'-CTGGCCGCGGC-3' consisting of two motifs in the promoters of key developmental regulatory genes. Involved in the regulation of the response to eactive oxygen species (ROS) stress. The protein is Velvet complex subunit B of Pyricularia oryzae (strain 70-15 / ATCC MYA-4617 / FGSC 8958) (Rice blast fungus).